A 212-amino-acid chain; its full sequence is uncharacterized protein (212 aa).

Pentapeptide repeat domains are found at residues 63-102, 103-142, and 143-182; these read VSFR…KMVG, MNVA…ALMQ, and SECS…RFEQ.

This is an uncharacterized protein from Bacillus subtilis (strain 168).